Here is a 341-residue protein sequence, read N- to C-terminus: Methionine import ATP-binding protein MetN (341 aa).

The 240-residue stretch at 2–241 folds into the ABC transporter domain; that stretch reads INLQDVSKVY…PKEQMTKRFV (240 aa). 38 to 45 provides a ligand contact to ATP; it reads GYSGAGKS.

It belongs to the ABC transporter superfamily. Methionine importer (TC 3.A.1.24) family. In terms of assembly, the complex is composed of two ATP-binding proteins (MetN), two transmembrane proteins (MetP) and a solute-binding protein (MetQ).

It is found in the cell membrane. The enzyme catalyses L-methionine(out) + ATP + H2O = L-methionine(in) + ADP + phosphate + H(+). It carries out the reaction D-methionine(out) + ATP + H2O = D-methionine(in) + ADP + phosphate + H(+). Functionally, part of the ABC transporter complex MetNPQ involved in methionine import. Responsible for energy coupling to the transport system. It has also been shown to be involved in methionine sulfoxide transport. The sequence is that of Methionine import ATP-binding protein MetN from Bacillus subtilis (strain 168).